A 56-amino-acid chain; its full sequence is Large ribosomal subunit protein bL32 (56 aa).

Residues 1–34 (MAVQQNKPTRSKRGMRRSHDALTTSTVSVDKASG) form a disordered region.

It belongs to the bacterial ribosomal protein bL32 family.

This is Large ribosomal subunit protein bL32 from Sodalis glossinidius (strain morsitans).